The sequence spans 317 residues: Beta-ketoacyl-[acyl-carrier-protein] synthase III (317 aa).

Active-site residues include C112 and H244. The tract at residues 245–249 is ACP-binding; that stretch reads QANLR. N274 is an active-site residue.

Belongs to the thiolase-like superfamily. FabH family. In terms of assembly, homodimer.

The protein resides in the cytoplasm. The enzyme catalyses malonyl-[ACP] + acetyl-CoA + H(+) = 3-oxobutanoyl-[ACP] + CO2 + CoA. It participates in lipid metabolism; fatty acid biosynthesis. Its function is as follows. Catalyzes the condensation reaction of fatty acid synthesis by the addition to an acyl acceptor of two carbons from malonyl-ACP. Catalyzes the first condensation reaction which initiates fatty acid synthesis and may therefore play a role in governing the total rate of fatty acid production. Possesses both acetoacetyl-ACP synthase and acetyl transacylase activities. Its substrate specificity determines the biosynthesis of branched-chain and/or straight-chain of fatty acids. The sequence is that of Beta-ketoacyl-[acyl-carrier-protein] synthase III from Blochmanniella pennsylvanica (strain BPEN).